The chain runs to 129 residues: Small ribosomal subunit protein uS11 (129 aa).

It belongs to the universal ribosomal protein uS11 family. In terms of assembly, part of the 30S ribosomal subunit. Interacts with proteins S7 and S18. Binds to IF-3.

Located on the platform of the 30S subunit, it bridges several disparate RNA helices of the 16S rRNA. Forms part of the Shine-Dalgarno cleft in the 70S ribosome. The sequence is that of Small ribosomal subunit protein uS11 from Maridesulfovibrio salexigens (strain ATCC 14822 / DSM 2638 / NCIMB 8403 / VKM B-1763) (Desulfovibrio salexigens).